The primary structure comprises 169 residues: Cell division inhibitor SulA (169 aa).

The interval 106–112 (ALRTGNY) is ftsZ binding. Positions 162–169 (KIHSNLYH) are lon protease binding.

It belongs to the SulA family. Interacts with FtsZ. In terms of processing, is rapidly cleaved and degraded by the Lon protease once DNA damage is repaired.

Component of the SOS system and an inhibitor of cell division. Accumulation of SulA causes rapid cessation of cell division and the appearance of long, non-septate filaments. In the presence of GTP, binds a polymerization-competent form of FtsZ in a 1:1 ratio, thus inhibiting FtsZ polymerization and therefore preventing it from participating in the assembly of the Z ring. This mechanism prevents the premature segregation of damaged DNA to daughter cells during cell division. The polypeptide is Cell division inhibitor SulA (Shigella boydii serotype 18 (strain CDC 3083-94 / BS512)).